A 517-amino-acid chain; its full sequence is Crotonobetaine/carnitine--CoA ligase (517 aa).

The protein belongs to the ATP-dependent AMP-binding enzyme family.

It carries out the reaction 4-(trimethylamino)butanoate + ATP + CoA = 4-(trimethylamino)butanoyl-CoA + AMP + diphosphate. It catalyses the reaction crotonobetaine + ATP + CoA = crotonobetainyl-CoA + AMP + diphosphate. The catalysed reaction is (R)-carnitine + ATP + CoA = (R)-carnitinyl-CoA + AMP + diphosphate. The protein operates within amine and polyamine metabolism; carnitine metabolism. Catalyzes the transfer of CoA to carnitine, generating the initial carnitinyl-CoA needed for the CaiB reaction cycle. Also has activity toward crotonobetaine and gamma-butyrobetaine. This chain is Crotonobetaine/carnitine--CoA ligase, found in Escherichia coli (strain ATCC 8739 / DSM 1576 / NBRC 3972 / NCIMB 8545 / WDCM 00012 / Crooks).